The primary structure comprises 423 residues: Probable sodium/metabolite cotransporter BASS4, chloroplastic (423 aa).

A chloroplast-targeting transit peptide spans 1-55; it reads MVTTHHLCLLRSTVLSVPVRLRAPRAPPHPRLPTASASASSYHGPTHLRRLRPLR. Residues 23-45 are disordered; sequence APRAPPHPRLPTASASASSYHGP. The next 9 helical transmembrane spans lie at 96-116, 123-140, 153-173, 182-202, 212-232, 244-264, 284-301, 315-335, and 389-409; these read FLPL…TLGC, LSKY…LTLR, AGLF…QFIM, FITG…GVTL, LALA…PLSL, LPTE…IILG, GFSV…WIQV, AFAV…AFNA, and LLVI…SIIV.

The protein belongs to the bile acid:sodium symporter (BASS) (TC 2.A.28) family.

It localises to the membrane. It is found in the plastid. Its subcellular location is the chloroplast envelope. May function as sodium-coupled metabolite transporter across the chloroplast envelope. The chain is Probable sodium/metabolite cotransporter BASS4, chloroplastic (BASS4) from Oryza sativa subsp. indica (Rice).